The following is a 292-amino-acid chain: Pyruvate formate-lyase 2-activating enzyme (292 aa).

In terms of domain architecture, Radical SAM core spans 33 to 287; that stretch reads NDGEGIRTVV…REMAERAGLQ (255 aa). [4Fe-4S] cluster contacts are provided by Cys47, Cys51, and Cys54. Residue 53–55 coordinates S-adenosyl-L-methionine; sequence WCA. A 4Fe-4S ferredoxin-type domain is found at 62 to 96; the sequence is GKIQTVRREAKCLHCAKCLRDADECPSGAFERIGR. S-adenosyl-L-methionine-binding positions include Gly126, 175–177, and His247; that span reads DLK.

Belongs to the organic radical-activating enzymes family. [4Fe-4S] cluster is required as a cofactor.

It is found in the cytoplasm. The catalysed reaction is glycyl-[formate C-acetyltransferase] + reduced [flavodoxin] + S-adenosyl-L-methionine = glycin-2-yl radical-[formate C-acetyltransferase] + semiquinone [flavodoxin] + 5'-deoxyadenosine + L-methionine + H(+). Its function is as follows. Activation of pyruvate formate-lyase 2 under anaerobic conditions by generation of an organic free radical, using S-adenosylmethionine and reduced flavodoxin as cosubstrates to produce 5'-deoxy-adenosine. This chain is Pyruvate formate-lyase 2-activating enzyme (pflC), found in Escherichia coli (strain K12).